We begin with the raw amino-acid sequence, 78 residues long: uncharacterized protein (78 aa).

The segment at 49-78 (QRASLERSNSIRNLQSQGKRRSDSKESRKL) is disordered. Residues 54-65 (ERSNSIRNLQSQ) are compositionally biased toward polar residues. Positions 68-78 (RRSDSKESRKL) are enriched in basic and acidic residues.

This is an uncharacterized protein from Saccharomyces cerevisiae (strain ATCC 204508 / S288c) (Baker's yeast).